We begin with the raw amino-acid sequence, 495 residues long: ATP synthase subunit beta, chloroplastic (495 aa).

Residue 172 to 179 participates in ATP binding; the sequence is GGAGVGKT.

It belongs to the ATPase alpha/beta chains family. In terms of assembly, F-type ATPases have 2 components, CF(1) - the catalytic core - and CF(0) - the membrane proton channel. CF(1) has five subunits: alpha(3), beta(3), gamma(1), delta(1), epsilon(1). CF(0) has four main subunits: a(1), b(1), b'(1) and c(9-12).

The protein resides in the plastid. It is found in the chloroplast thylakoid membrane. It carries out the reaction ATP + H2O + 4 H(+)(in) = ADP + phosphate + 5 H(+)(out). Produces ATP from ADP in the presence of a proton gradient across the membrane. The catalytic sites are hosted primarily by the beta subunits. The sequence is that of ATP synthase subunit beta, chloroplastic from Eucomis bicolor (King's flower).